The sequence spans 194 residues: Peptidyl-tRNA hydrolase (194 aa).

A tRNA-binding site is contributed by Tyr17. The active-site Proton acceptor is His22. The tRNA site is built by Tyr68, Asn70, and Asn116.

This sequence belongs to the PTH family. As to quaternary structure, monomer.

It localises to the cytoplasm. It carries out the reaction an N-acyl-L-alpha-aminoacyl-tRNA + H2O = an N-acyl-L-amino acid + a tRNA + H(+). In terms of biological role, hydrolyzes ribosome-free peptidyl-tRNAs (with 1 or more amino acids incorporated), which drop off the ribosome during protein synthesis, or as a result of ribosome stalling. Functionally, catalyzes the release of premature peptidyl moieties from peptidyl-tRNA molecules trapped in stalled 50S ribosomal subunits, and thus maintains levels of free tRNAs and 50S ribosomes. This Pseudomonas aeruginosa (strain LESB58) protein is Peptidyl-tRNA hydrolase.